Reading from the N-terminus, the 248-residue chain is Molybdate/tungstate transport system permease protein WtpB (248 aa).

Over 1–9 (MGGRDYTLY) the chain is Cytoplasmic. A helical transmembrane segment spans residues 10–30 (LFAALGSFLIVYIALPIIVIF). Topologically, residues 31–56 (TKQALDFRMLVKTIHDPLVIEALRNS) are extracellular. The 187-residue stretch at 53–239 (LRNSLLTATA…GISLGIFVVL (187 aa)) folds into the ABC transmembrane type-1 domain. A helical membrane pass occupies residues 57–77 (LLTATATALISLLFGVPLGYV). The Cytoplasmic segment spans residues 78 to 91 (LARKDFRGKSLVQA). Residues 92–112 (IIDVPIVIPHSVVGIMLLVTF) form a helical membrane-spanning segment. The Extracellular portion of the chain corresponds to 113–115 (SNA). Residues 116–136 (ILDSYKGIIAAMLFVSAPFAI) traverse the membrane as a helical segment. The Cytoplasmic portion of the chain corresponds to 137–164 (NSARDGFLAVDEKLEHVARTLGASKLRT). A helical transmembrane segment spans residues 165–185 (FFSISLPIALPSIASGAIMAW). Over 186 to 223 (ARGISEVGAILIVAYYPKTAQVLVMEYFNNYGLRASRP) the chain is Extracellular. The helical transmembrane segment at 224-244 (ISVILMGISLGIFVVLRWLIG) threads the bilayer. The Cytoplasmic portion of the chain corresponds to 245-248 (KAKS).

Belongs to the binding-protein-dependent transport system permease family. As to quaternary structure, the complex is composed of two ATP-binding proteins (WtpC), two transmembrane proteins (WtpB) and a solute-binding protein (WtpA).

The protein resides in the cell membrane. Functionally, part of the ABC transporter complex WtpABC involved in molybdate/tungstate import. Probably responsible for the translocation of the substrate across the membrane. The polypeptide is Molybdate/tungstate transport system permease protein WtpB (wtpB) (Pyrococcus abyssi (strain GE5 / Orsay)).